Consider the following 369-residue polypeptide: 3-isopropylmalate dehydrogenase (369 aa).

Arg-98, Arg-108, Arg-136, and Asp-227 together coordinate substrate. 3 residues coordinate Mg(2+): Asp-227, Asp-251, and Asp-255. 290 to 302 is an NAD(+) binding site; it reads GSAPDIAGKGIAN.

Belongs to the isocitrate and isopropylmalate dehydrogenases family. LeuB type 1 subfamily. In terms of assembly, homodimer. Requires Mg(2+) as cofactor. Mn(2+) serves as cofactor.

The protein resides in the cytoplasm. The enzyme catalyses (2R,3S)-3-isopropylmalate + NAD(+) = 4-methyl-2-oxopentanoate + CO2 + NADH. The protein operates within amino-acid biosynthesis; L-leucine biosynthesis; L-leucine from 3-methyl-2-oxobutanoate: step 3/4. Catalyzes the oxidation of 3-carboxy-2-hydroxy-4-methylpentanoate (3-isopropylmalate) to 3-carboxy-4-methyl-2-oxopentanoate. The product decarboxylates to 4-methyl-2 oxopentanoate. This chain is 3-isopropylmalate dehydrogenase, found in Gluconobacter oxydans (strain 621H) (Gluconobacter suboxydans).